The sequence spans 196 residues: MADS-box protein FLOWERING LOCUS C (196 aa).

One can recognise an MADS-box domain in the interval 1 to 61 (MGRKKLEIKR…GKLYSFSSGD (61 aa)). A Nuclear localization signal motif is present at residues 8-15 (IKRIENKS). The region spanning 80-170 (ALDHQSKALN…ASQMENNHHV (91 aa)) is the K-box domain.

As to expression, high expression in the vegetative apex and in root tissue and lower expression in leaves and stems. Not detected in young tissues of the inflorescence. Before fertilization, expressed in ovules, but not in pollen or stamens, of non-vernalized plants. After vernalization, not detected in ovules.

The protein resides in the nucleus. In terms of biological role, putative transcription factor that seems to play a central role in the regulation of flowering time in the late-flowering phenotype by interacting with 'FRIGIDA', the autonomous and the vernalization flowering pathways. Inhibits flowering by repressing 'SUPPRESSOR OF OVEREXPRESSION OF CONSTANS 1'. At elevated temperatures (e.g. 29 degrees Celsius), maintained at high levels in a JMJ30/JMJ32-dependent manner to prevent extreme precocious flowering. The protein is MADS-box protein FLOWERING LOCUS C of Arabidopsis thaliana (Mouse-ear cress).